The primary structure comprises 240 residues: MATLFIADLHLCVEEPAITAGFLRFLAGEARKADALYILGDLFEAWIGDDDPNPLHRQMAAAIKAVSDSGVPCYFIHGNRDFLLGKRFARESGMTLLPEEKVLELYGRRVLIMHGDTLCTDDIGYQAFRAKVHKPWLQTLFLALPLFVRKRIAARMRANSKEANSSKSLAIMDVNQNAVVSAMEKHQVQWLIHGHTHRPAVHELIANQQPAFRVVLGAWHTEGSMVKVTADDVELIHFPF.

Positions 8, 10, 41, 79, and 114 each coordinate Mn(2+). 79–80 (NR) contributes to the substrate binding site. Positions 122, 160, 164, 167, and 195 each coordinate substrate. Mn(2+)-binding residues include histidine 195 and histidine 197.

It belongs to the LpxH family. Mn(2+) serves as cofactor.

It is found in the cell inner membrane. The enzyme catalyses UDP-2-N,3-O-bis[(3R)-3-hydroxytetradecanoyl]-alpha-D-glucosamine + H2O = 2-N,3-O-bis[(3R)-3-hydroxytetradecanoyl]-alpha-D-glucosaminyl 1-phosphate + UMP + 2 H(+). It participates in glycolipid biosynthesis; lipid IV(A) biosynthesis; lipid IV(A) from (3R)-3-hydroxytetradecanoyl-[acyl-carrier-protein] and UDP-N-acetyl-alpha-D-glucosamine: step 4/6. Functionally, hydrolyzes the pyrophosphate bond of UDP-2,3-diacylglucosamine to yield 2,3-diacylglucosamine 1-phosphate (lipid X) and UMP by catalyzing the attack of water at the alpha-P atom. Involved in the biosynthesis of lipid A, a phosphorylated glycolipid that anchors the lipopolysaccharide to the outer membrane of the cell. This is UDP-2,3-diacylglucosamine hydrolase from Escherichia fergusonii (strain ATCC 35469 / DSM 13698 / CCUG 18766 / IAM 14443 / JCM 21226 / LMG 7866 / NBRC 102419 / NCTC 12128 / CDC 0568-73).